The primary structure comprises 355 residues: Tryptophan--tRNA ligase (355 aa).

Residues 13–15 and 21–22 each bind ATP; these read QPT and GN. Positions 14 to 22 match the 'HIGH' region motif; that stretch reads PTGNLHLGN. Asp137 contributes to the L-tryptophan binding site. Residues 149–151, Ile208, and 217–221 each bind ATP; these read GED and KMSKS. Residues 217–221 carry the 'KMSKS' region motif; sequence KMSKS.

The protein belongs to the class-I aminoacyl-tRNA synthetase family. Homodimer.

Its subcellular location is the cytoplasm. It catalyses the reaction tRNA(Trp) + L-tryptophan + ATP = L-tryptophyl-tRNA(Trp) + AMP + diphosphate + H(+). Catalyzes the attachment of tryptophan to tRNA(Trp). The protein is Tryptophan--tRNA ligase of Mesorhizobium japonicum (strain LMG 29417 / CECT 9101 / MAFF 303099) (Mesorhizobium loti (strain MAFF 303099)).